The chain runs to 549 residues: Glucose-6-phosphate isomerase 1 (549 aa).

The Proton donor role is filled by E358. Catalysis depends on residues H389 and K513.

It belongs to the GPI family.

The protein resides in the cytoplasm. It catalyses the reaction alpha-D-glucose 6-phosphate = beta-D-fructose 6-phosphate. It participates in carbohydrate biosynthesis; gluconeogenesis. It functions in the pathway carbohydrate degradation; glycolysis; D-glyceraldehyde 3-phosphate and glycerone phosphate from D-glucose: step 2/4. Its function is as follows. Catalyzes the reversible isomerization of glucose-6-phosphate to fructose-6-phosphate. This chain is Glucose-6-phosphate isomerase 1, found in Streptomyces avermitilis (strain ATCC 31267 / DSM 46492 / JCM 5070 / NBRC 14893 / NCIMB 12804 / NRRL 8165 / MA-4680).